The chain runs to 236 residues: Aspartate/glutamate leucyltransferase (236 aa).

It belongs to the R-transferase family. Bpt subfamily.

The protein localises to the cytoplasm. The catalysed reaction is N-terminal L-glutamyl-[protein] + L-leucyl-tRNA(Leu) = N-terminal L-leucyl-L-glutamyl-[protein] + tRNA(Leu) + H(+). It carries out the reaction N-terminal L-aspartyl-[protein] + L-leucyl-tRNA(Leu) = N-terminal L-leucyl-L-aspartyl-[protein] + tRNA(Leu) + H(+). In terms of biological role, functions in the N-end rule pathway of protein degradation where it conjugates Leu from its aminoacyl-tRNA to the N-termini of proteins containing an N-terminal aspartate or glutamate. The chain is Aspartate/glutamate leucyltransferase from Saccharophagus degradans (strain 2-40 / ATCC 43961 / DSM 17024).